We begin with the raw amino-acid sequence, 353 residues long: UPF0283 membrane protein YcjF (353 aa).

Helical transmembrane passes span 70 to 90, 100 to 120, and 213 to 233; these read MVMG…VQWT, VALG…GSVV, and ESTL…FIAW.

The protein belongs to the UPF0283 family.

The protein localises to the cell inner membrane. The chain is UPF0283 membrane protein YcjF from Escherichia coli O45:K1 (strain S88 / ExPEC).